The chain runs to 492 residues: Cytoplasmic dynein 1 light intermediate chain 2 (492 aa).

G61–T68 contributes to the ATP binding site. Disordered stretches follow at residues P187–D206, A371–A423, and L437–A492. S194 bears the Phosphoserine mark. The segment covering A371–S381 has biased composition (polar residues). Residues S383 and S391 each carry the phosphoserine modification. R397 carries the post-translational modification Omega-N-methylarginine. Residue T441 is modified to Phosphothreonine. 2 positions are modified to phosphoserine: S443 and S446. Polar residues predominate over residues V452 to Q469. Over residues E471–D480 the composition is skewed to basic and acidic residues. A compositionally biased stretch (polar residues) spans M482 to A492.

The protein belongs to the dynein light intermediate chain family. As to quaternary structure, homodimer. The cytoplasmic dynein 1 complex consists of two catalytic heavy chains (HCs) and a number of non-catalytic subunits presented by intermediate chains (ICs), light intermediate chains (LICs) and light chains (LCs); the composition seems to vary in respect to the IC, LIC and LC composition. The heavy chain homodimer serves as a scaffold for the probable homodimeric assembly of the respective non-catalytic subunits. The ICs and LICs bind directly to the HC dimer and the LCs assemble on the IC dimer. Interacts with DYNC1H1; DYNC1LI1 and DYNC1LI2 bind mutually exclusive to DYNC1H.

It localises to the cytoplasm. The protein resides in the cytoskeleton. In terms of biological role, acts as one of several non-catalytic accessory components of the cytoplasmic dynein 1 complex that are thought to be involved in linking dynein to cargos and to adapter proteins that regulate dynein function. Cytoplasmic dynein 1 acts as a motor for the intracellular retrograde motility of vesicles and organelles along microtubules. May play a role in binding dynein to membranous organelles or chromosomes. This Pongo abelii (Sumatran orangutan) protein is Cytoplasmic dynein 1 light intermediate chain 2 (DYNC1LI2).